A 494-amino-acid chain; its full sequence is Aspartyl/glutamyl-tRNA(Asn/Gln) amidotransferase subunit B (494 aa).

Belongs to the GatB/GatE family. GatB subfamily. In terms of assembly, heterotrimer of A, B and C subunits.

It catalyses the reaction L-glutamyl-tRNA(Gln) + L-glutamine + ATP + H2O = L-glutaminyl-tRNA(Gln) + L-glutamate + ADP + phosphate + H(+). The enzyme catalyses L-aspartyl-tRNA(Asn) + L-glutamine + ATP + H2O = L-asparaginyl-tRNA(Asn) + L-glutamate + ADP + phosphate + 2 H(+). Functionally, allows the formation of correctly charged Asn-tRNA(Asn) or Gln-tRNA(Gln) through the transamidation of misacylated Asp-tRNA(Asn) or Glu-tRNA(Gln) in organisms which lack either or both of asparaginyl-tRNA or glutaminyl-tRNA synthetases. The reaction takes place in the presence of glutamine and ATP through an activated phospho-Asp-tRNA(Asn) or phospho-Glu-tRNA(Gln). The chain is Aspartyl/glutamyl-tRNA(Asn/Gln) amidotransferase subunit B from Rhodopseudomonas palustris (strain BisB5).